Consider the following 942-residue polypeptide: Isoleucine--tRNA ligase (942 aa).

Positions proline 58 to histidine 68 match the 'HIGH' region motif. Glutamate 564 is a binding site for L-isoleucyl-5'-AMP. The 'KMSKS' region signature appears at lysine 605 to serine 609. Residue lysine 608 participates in ATP binding. Residues cysteine 905, cysteine 908, cysteine 925, and cysteine 928 each contribute to the Zn(2+) site.

This sequence belongs to the class-I aminoacyl-tRNA synthetase family. IleS type 1 subfamily. Monomer. Zn(2+) is required as a cofactor.

It localises to the cytoplasm. It carries out the reaction tRNA(Ile) + L-isoleucine + ATP = L-isoleucyl-tRNA(Ile) + AMP + diphosphate. In terms of biological role, catalyzes the attachment of isoleucine to tRNA(Ile). As IleRS can inadvertently accommodate and process structurally similar amino acids such as valine, to avoid such errors it has two additional distinct tRNA(Ile)-dependent editing activities. One activity is designated as 'pretransfer' editing and involves the hydrolysis of activated Val-AMP. The other activity is designated 'posttransfer' editing and involves deacylation of mischarged Val-tRNA(Ile). This is Isoleucine--tRNA ligase from Blochmanniella pennsylvanica (strain BPEN).